A 254-amino-acid polypeptide reads, in one-letter code: Small ribosomal subunit protein uS2 (254 aa).

The protein belongs to the universal ribosomal protein uS2 family.

The chain is Small ribosomal subunit protein uS2 from Oceanobacillus iheyensis (strain DSM 14371 / CIP 107618 / JCM 11309 / KCTC 3954 / HTE831).